Consider the following 349-residue polypeptide: Adenine deaminase (349 aa).

Residues histidine 24, histidine 26, and histidine 204 each contribute to the Zn(2+) site. The Proton donor role is filled by glutamate 207. Aspartate 285 is a Zn(2+) binding site. Substrate is bound at residue aspartate 286.

It belongs to the metallo-dependent hydrolases superfamily. Adenosine and AMP deaminases family. Adenine deaminase type 2 subfamily. Zn(2+) is required as a cofactor.

It catalyses the reaction adenine + H2O + H(+) = hypoxanthine + NH4(+). Functionally, catalyzes the hydrolytic deamination of adenine to hypoxanthine. Plays an important role in the purine salvage pathway and in nitrogen catabolism. The sequence is that of Adenine deaminase from Trichlorobacter lovleyi (strain ATCC BAA-1151 / DSM 17278 / SZ) (Geobacter lovleyi).